We begin with the raw amino-acid sequence, 89 residues long: Small ribosomal subunit protein uS15 (89 aa).

Belongs to the universal ribosomal protein uS15 family. Part of the 30S ribosomal subunit. Forms a bridge to the 50S subunit in the 70S ribosome, contacting the 23S rRNA.

In terms of biological role, one of the primary rRNA binding proteins, it binds directly to 16S rRNA where it helps nucleate assembly of the platform of the 30S subunit by binding and bridging several RNA helices of the 16S rRNA. Functionally, forms an intersubunit bridge (bridge B4) with the 23S rRNA of the 50S subunit in the ribosome. This chain is Small ribosomal subunit protein uS15, found in Thermobifida fusca (strain YX).